We begin with the raw amino-acid sequence, 339 residues long: Uridylate kinase PUMPKIN, chloroplastic (339 aa).

A chloroplast-targeting transit peptide spans 1–53 (MAIPLPLTSCSPISTSSSISRTSFVPLTLRNRTFFSNQNYSRRVLISCSSSLS). A compositionally biased stretch (low complexity) spans 52–79 (LSSDNGSSPDSMNGNGNGNGSSLNGQSS). The segment at 52–89 (LSSDNGSSPDSMNGNGNGNGSSLNGQSSFPRLPSFDGT) is disordered. 102 to 105 (KVSG) lines the ATP pocket. Residues 110–115 (GDEEQN) are involved in allosteric activation by GTP. G144 lines the UMP pocket. 2 residues coordinate ATP: G145 and R149. D165 contributes to the UMP binding site. Residues 180-184 (QATME) and 189-191 (PTR) contribute to the ATP site. 226–233 (TGNPFFTT) is a binding site for UMP. 3 residues coordinate ATP: T253, F259, and D262.

The protein belongs to the UMP kinase family. Homomultimer. Homohexamer. Forms RNA-containing megadalton-sized complexes. As to expression, expressed exclusively in leaves, but not in roots.

The protein localises to the plastid. The protein resides in the chloroplast stroma. The enzyme catalyses UMP + ATP = UDP + ADP. Its pathway is pyrimidine metabolism; CTP biosynthesis via de novo pathway; UDP from UMP (UMPK route): step 1/1. Its function is as follows. Catalyzes the reversible phosphorylation of UMP to UDP. Required for specific post-transcriptional processes of many plastid transcripts (e.g. PSI (PsaA, PsaF), PSII (D1, CP43, CP47), Cytochrome b(6)f (Cytb(6)), ATP synthase (AtpC), LHCs (LHCa3, LHCb2), and NDH (NdhH)), thus being essential for retaining photosynthetic activity in chloroplasts. Associates with group II introns of the plastid transcripts trnG-UCC, trnV-UAC, petB, petD and ndhA to stabilize corresponding precursor RNAs. The sequence is that of Uridylate kinase PUMPKIN, chloroplastic from Arabidopsis thaliana (Mouse-ear cress).